Reading from the N-terminus, the 323-residue chain is Calcium homeostasis modulator protein 2 (323 aa).

Over 1 to 21 the chain is Cytoplasmic; sequence MAALIAENFRFLSLFFKSKDV. Residues 14 to 39 are central pore; it reads LFFKSKDVMIFNGLVALGTVGSQELF. The chain crosses the membrane as a helical span at residues 22–43; that stretch reads MIFNGLVALGTVGSQELFSVVA. The Extracellular portion of the chain corresponds to 44–52; sequence FHCPCSPAR. Disulfide bonds link cysteine 46–cysteine 130 and cysteine 48–cysteine 162. Residues 53 to 76 traverse the membrane as a helical segment; that stretch reads NYLYGLTAIGVPALALFLIGVILN. Topologically, residues 77 to 101 are cytoplasmic; the sequence is NHTWNLVAECQYRRAKNCSAAPTFL. Residues 102–132 traverse the membrane as a helical segment; the sequence is LLSSILGRAAVAPVTWSVISLLRGEAYVCAL. At 133-179 the chain is on the extracellular side; it reads SEFVDPSSLTAGDEGFPPDHATEILARFPCGEGPANLSGFREEVSRR. Residues 145–152 form a hemichannel docking region; it reads DEGFPPDH. A helical transmembrane segment spans residues 180–206; that stretch reads LKYESQLFGWLLIGVVAILVFLTKCFK. Residues 207–323 lie on the Cytoplasmic side of the membrane; sequence HYCSPLSYRQ…DNVEMALLTV (117 aa). The segment at 214–251 is intersubunit interaction; it reads YRQEAYWAQYRTNEDQLFQRTAEVHSRVLAANNVRRFF.

Belongs to the CALHM family. Homo-undecamer. Two undecameric hemichannels can assemble in a head-to-head manner to form a gap junction.

It is found in the cell membrane. The enzyme catalyses ATP(in) = ATP(out). Its function is as follows. Pore-forming subunit of Ca(2+) homeostasis modulator channels. Mediates ATP release from astrocytes and ATP-induced Ca(2+) influx in microglia thus regulating neuronal ATP and Ca(2+) homeostasis, synaptic transmission and neuroinflammatory response. May form intercellular gap junctions. The gating mechanism remains unknown. This is Calcium homeostasis modulator protein 2 (Calhm2) from Rattus norvegicus (Rat).